A 354-amino-acid polypeptide reads, in one-letter code: Mycothiol acetyltransferase (354 aa).

Over residues 1 to 18 (MMVDNQTPDSSTLSTAST) the composition is skewed to polar residues. The disordered stretch occupies residues 1–21 (MMVDNQTPDSSTLSTASTPVY). N-acetyltransferase domains lie at 21–176 (YAEP…QTRE) and 191–354 (LRMR…EPAA). E52 contacts 1D-myo-inositol 2-(L-cysteinylamino)-2-deoxy-alpha-D-glucopyranoside. 101 to 103 (AAV) contacts acetyl-CoA. The 1D-myo-inositol 2-(L-cysteinylamino)-2-deoxy-alpha-D-glucopyranoside site is built by E217, K259, and E274. Residues 278 to 280 (VGV) and 285 to 291 (QGGGLGR) contribute to the acetyl-CoA site. Y318 contributes to the 1D-myo-inositol 2-(L-cysteinylamino)-2-deoxy-alpha-D-glucopyranoside binding site.

Belongs to the acetyltransferase family. MshD subfamily. Monomer.

It carries out the reaction 1D-myo-inositol 2-(L-cysteinylamino)-2-deoxy-alpha-D-glucopyranoside + acetyl-CoA = mycothiol + CoA + H(+). Functionally, catalyzes the transfer of acetyl from acetyl-CoA to desacetylmycothiol (Cys-GlcN-Ins) to form mycothiol. The polypeptide is Mycothiol acetyltransferase (Rothia mucilaginosa (strain DY-18) (Stomatococcus mucilaginosus)).